The chain runs to 180 residues: ATP synthase subunit delta (180 aa).

This sequence belongs to the ATPase delta chain family. F-type ATPases have 2 components, F(1) - the catalytic core - and F(0) - the membrane proton channel. F(1) has five subunits: alpha(3), beta(3), gamma(1), delta(1), epsilon(1). F(0) has three main subunits: a(1), b(2) and c(10-14). The alpha and beta chains form an alternating ring which encloses part of the gamma chain. F(1) is attached to F(0) by a central stalk formed by the gamma and epsilon chains, while a peripheral stalk is formed by the delta and b chains.

The protein resides in the cell inner membrane. F(1)F(0) ATP synthase produces ATP from ADP in the presence of a proton or sodium gradient. F-type ATPases consist of two structural domains, F(1) containing the extramembraneous catalytic core and F(0) containing the membrane proton channel, linked together by a central stalk and a peripheral stalk. During catalysis, ATP synthesis in the catalytic domain of F(1) is coupled via a rotary mechanism of the central stalk subunits to proton translocation. Its function is as follows. This protein is part of the stalk that links CF(0) to CF(1). It either transmits conformational changes from CF(0) to CF(1) or is implicated in proton conduction. In Parabacteroides distasonis (strain ATCC 8503 / DSM 20701 / CIP 104284 / JCM 5825 / NCTC 11152), this protein is ATP synthase subunit delta.